A 526-amino-acid polypeptide reads, in one-letter code: DDB1- and CUL4-associated factor 17 (526 aa).

The next 2 helical transmembrane spans lie at 200-220 and 237-257; these read ILMR…MLEI and GVLA…EYIV.

It is found in the membrane. The protein resides in the nucleus. Its subcellular location is the nucleolus. Its pathway is protein modification; protein ubiquitination. In terms of biological role, may function as a substrate receptor for CUL4-DDB1 E3 ubiquitin-protein ligase complex. In Danio rerio (Zebrafish), this protein is DDB1- and CUL4-associated factor 17 (dcaf17).